The chain runs to 356 residues: UDP-N-acetylglucosamine--N-acetylmuramyl-(pentapeptide) pyrophosphoryl-undecaprenol N-acetylglucosamine transferase (356 aa).

UDP-N-acetyl-alpha-D-glucosamine-binding positions include 12 to 14, Asn-124, Arg-163, Ser-188, Ile-242, 261 to 266, and Gln-287; these read TGG and ALTVSE.

This sequence belongs to the glycosyltransferase 28 family. MurG subfamily.

It is found in the cell inner membrane. The catalysed reaction is di-trans,octa-cis-undecaprenyl diphospho-N-acetyl-alpha-D-muramoyl-L-alanyl-D-glutamyl-meso-2,6-diaminopimeloyl-D-alanyl-D-alanine + UDP-N-acetyl-alpha-D-glucosamine = di-trans,octa-cis-undecaprenyl diphospho-[N-acetyl-alpha-D-glucosaminyl-(1-&gt;4)]-N-acetyl-alpha-D-muramoyl-L-alanyl-D-glutamyl-meso-2,6-diaminopimeloyl-D-alanyl-D-alanine + UDP + H(+). Its pathway is cell wall biogenesis; peptidoglycan biosynthesis. Its function is as follows. Cell wall formation. Catalyzes the transfer of a GlcNAc subunit on undecaprenyl-pyrophosphoryl-MurNAc-pentapeptide (lipid intermediate I) to form undecaprenyl-pyrophosphoryl-MurNAc-(pentapeptide)GlcNAc (lipid intermediate II). In Ectopseudomonas mendocina (strain ymp) (Pseudomonas mendocina), this protein is UDP-N-acetylglucosamine--N-acetylmuramyl-(pentapeptide) pyrophosphoryl-undecaprenol N-acetylglucosamine transferase.